The sequence spans 205 residues: Protein PAXX (205 aa).

One can recognise a PISA domain in the interval 39 to 81 (FNLYVTDAAELWSTCFSPDSLARLKARFGLSGAEDIHSRFRAA). T147 bears the Phosphothreonine mark. Polar residues predominate over residues 147 to 159 (TITSPKKNTQPAG). The segment at 147–205 (TITSPKKNTQPAGTQFLPELDHQRGSSGPGVRRRCPGESLINPGFKSKKPAAGVDFDET) is disordered. Position 150 is a phosphoserine (S150). The mediates interaction with XRCC5/Ku80 and XRCC6/Ku70 and association with the non-homologous end joining core complex stretch occupies residues 172-205 (SSGPGVRRRCPGESLINPGFKSKKPAAGVDFDET). Positions 191-205 (FKSKKPAAGVDFDET) match the XLM motif.

It belongs to the XRCC4-XLF family. PAXX subfamily. In terms of assembly, homodimer. Interacts with the DNA-bound XRCC5/Ku80 and XRCC6/Ku70 heterodimer (Ku complex); the interaction is direct. Associated component of the non-homologous end joining (NHEJ) complex, composed of the core proteins PRKDC, LIG4, XRCC4, XRCC6/Ku70, XRCC5/Ku86 and NHEJ1/XLF. Interacts with POLL (DNA polymerase lambda); promoting POLL recruitment to double-strand breaks (DSBs) and stimulation of the end-filling activity of POLL. Phosphorylation may inhibit interaction with the DNA-bound XRCC5/Ku80 and XRCC6/Ku70 heterodimer (Ku complex).

It is found in the nucleus. The protein resides in the chromosome. Functionally, non-essential DNA repair protein involved in DNA non-homologous end joining (NHEJ); participates in double-strand break (DSB) repair and V(D)J recombination. May act as a scaffold required for accumulation of the Ku heterodimer, composed of XRCC5/Ku80 and XRCC6/Ku70, at double-strand break sites and promote the assembly and/or stability of the NHEJ machinery. Involved in NHEJ by promoting the ligation of blunt-ended DNA ends. Together with NHEJ1/XLF, collaborates with DNA polymerase lambda (POLL) to promote joining of non-cohesive DNA ends. Constitutes a non-essential component of classical NHEJ: has a complementary but distinct function with NHEJ1/XLF in DNA repair. In Mus musculus (Mouse), this protein is Protein PAXX.